The sequence spans 389 residues: Lipid-A-disaccharide synthase (389 aa).

This sequence belongs to the LpxB family.

The catalysed reaction is a lipid X + a UDP-2-N,3-O-bis[(3R)-3-hydroxyacyl]-alpha-D-glucosamine = a lipid A disaccharide + UDP + H(+). It participates in bacterial outer membrane biogenesis; LPS lipid A biosynthesis. Condensation of UDP-2,3-diacylglucosamine and 2,3-diacylglucosamine-1-phosphate to form lipid A disaccharide, a precursor of lipid A, a phosphorylated glycolipid that anchors the lipopolysaccharide to the outer membrane of the cell. The sequence is that of Lipid-A-disaccharide synthase from Albidiferax ferrireducens (strain ATCC BAA-621 / DSM 15236 / T118) (Rhodoferax ferrireducens).